Reading from the N-terminus, the 70-residue chain is Insulin (70 aa).

Disulfide bonds link Cys7/Cys56, Cys19/Cys69, and Cys55/Cys60. Residues 33–49 (FVDSLAGYSKHQNGGIS) constitute a propeptide, c peptide.

Belongs to the insulin family. Heterodimer of a B chain and an A chain linked by two disulfide bonds.

The protein localises to the secreted. Functionally, insulin decreases blood glucose concentration. It increases cell permeability to monosaccharides, amino acids and fatty acids. It accelerates glycolysis, the pentose phosphate cycle, and glycogen synthesis in liver. The protein is Insulin (ins) of Torpedo marmorata (Marbled electric ray).